The chain runs to 221 residues: Small ribosomal subunit protein uS3 (221 aa).

One can recognise a KH type-2 domain in the interval leucine 39–arginine 107.

The protein belongs to the universal ribosomal protein uS3 family. In terms of assembly, part of the 30S ribosomal subunit. Forms a tight complex with proteins S10 and S14.

Functionally, binds the lower part of the 30S subunit head. Binds mRNA in the 70S ribosome, positioning it for translation. The sequence is that of Small ribosomal subunit protein uS3 from Bdellovibrio bacteriovorus (strain ATCC 15356 / DSM 50701 / NCIMB 9529 / HD100).